The sequence spans 103 residues: Large ribosomal subunit protein bL21 (103 aa).

Belongs to the bacterial ribosomal protein bL21 family. As to quaternary structure, part of the 50S ribosomal subunit. Contacts protein L20.

In terms of biological role, this protein binds to 23S rRNA in the presence of protein L20. This chain is Large ribosomal subunit protein bL21, found in Polynucleobacter necessarius subsp. necessarius (strain STIR1).